The sequence spans 148 residues: MNTRYVKSFFLLLFFLSFFGTMASLFYSEIMHFKPCVLCWYQRIFLYPIPIILLIGLLKKDLNSIFYVVFLSSIGLIIAFYHYIIQLTQSKSVVCEIGTNSCAKIEVEYLGFITLPLMSSVCFALIFGIGLKLIIKSKKLKQNQHVYN.

A helical transmembrane segment spans residues 7-26; that stretch reads KSFFLLLFFLSFFGTMASLF. Cysteine 36 and cysteine 39 form a disulfide bridge. The next 2 membrane-spanning stretches (helical) occupy residues 41–60 and 67–84; these read YQRIFLYPIPIILLIGLLKK and YVVFLSSIGLIIAFYHYI. The cysteines at positions 95 and 102 are disulfide-linked. The helical transmembrane segment at 111–135 threads the bilayer; sequence GFITLPLMSSVCFALIFGIGLKLII.

This sequence belongs to the DsbB family. BdbC subfamily.

The protein localises to the cell membrane. Its function is as follows. Important but not absolutely essential for the production of the lantibiotic sublancin 168, it may also be required for the stability of other secreted proteins. Not required for competence for DNA uptake. The polypeptide is SPbeta prophage-derived disulfide bond formation protein B (bdbB) (Bacillus subtilis (strain 168)).